Reading from the N-terminus, the 4625-residue chain is Dynein-1-alpha heavy chain, flagellar inner arm I1 complex (4625 aa).

Residues 1–1919 (MDRRLEWVKE…LIRQCTGLFK (1919 aa)) are stem. Residues 70–84 (EQAPEAEDGEGEEHD) show a composition bias toward acidic residues. Positions 70–163 (EQAPEAEDGE…DEPPAPPAPK (94 aa)) are disordered. Low complexity predominate over residues 111–140 (EDAPAAAAEANGANPEDEAAAPADGAADGA). The segment covering 144–155 (GGEEGDGAEGDE) has biased composition (acidic residues). An ATP-binding site is contributed by 960 to 967 (AGTNSGKS). Coiled coils occupy residues 1227–1259 (EELKQVLNTVNTIRGESMVMELRYADLEERYRT) and 1339–1409 (TVEL…AVRQ). 4 AAA regions span residues 1920-2141 (YGYE…VLVM), 2201-2437 (DVVE…RRPK), 2550-2800 (EPPA…IYEG), and 2906-3155 (NFYN…LRRY). ATP is bound by residues 1958–1965 (GPAGTGKT), 2242–2249 (GQTGGGKT), 2588–2595 (GESGTAKS), and 2945–2952 (GVGGSGKQ). Coiled coils occupy residues 3192 to 3297 (LEKL…IRSY) and 3400 to 3494 (KRKK…LIGD). Residues 3192-3494 (LEKLIQAAVE…ESRRDRLIGD (303 aa)) are stalk. AAA regions lie at residues 3542–3773 (LTSD…EIAE) and 3998–4216 (ITRF…LIST). 3680–3687 (GPEISGKT) provides a ligand contact to ATP. Positions 3701–3788 (EQLLNVTLRH…KVTAAEIEET (88 aa)) form a coiled coil.

Belongs to the dynein heavy chain family. The I1 inner arm complex (also known as the f dynein complex) is a two-headed isoform composed of two heavy chains (1-alpha and 1-beta), three intermediate chains and three light chains. I1 occupies a specific position proximal to the first radial spoke and repeats every 96 nm along the length of the axoneme.

It localises to the cell projection. It is found in the cilium. Its subcellular location is the flagellum. The protein localises to the cytoplasm. The protein resides in the cytoskeleton. It localises to the flagellum axoneme. Force generating protein of eukaryotic cilia and flagella. Produces force towards the minus ends of microtubules. Dynein has ATPase activity; the force-producing power stroke is thought to occur on release of ADP. Required for assembly of the I1 inner arm complex and its targeting to the appropriate axoneme location. Also required for phototaxis. This chain is Dynein-1-alpha heavy chain, flagellar inner arm I1 complex (DHC1), found in Chlamydomonas reinhardtii (Chlamydomonas smithii).